Consider the following 638-residue polypeptide: Threonine--tRNA ligase (638 aa).

The 61-residue stretch at Met-1 to Thr-61 folds into the TGS domain. The catalytic stretch occupies residues Asp-242–Pro-533. Residues Cys-333, His-384, and His-510 each contribute to the Zn(2+) site.

The protein belongs to the class-II aminoacyl-tRNA synthetase family. As to quaternary structure, homodimer. Requires Zn(2+) as cofactor.

The protein resides in the cytoplasm. The catalysed reaction is tRNA(Thr) + L-threonine + ATP = L-threonyl-tRNA(Thr) + AMP + diphosphate + H(+). In terms of biological role, catalyzes the attachment of threonine to tRNA(Thr) in a two-step reaction: L-threonine is first activated by ATP to form Thr-AMP and then transferred to the acceptor end of tRNA(Thr). Also edits incorrectly charged L-seryl-tRNA(Thr). The protein is Threonine--tRNA ligase of Methylococcus capsulatus (strain ATCC 33009 / NCIMB 11132 / Bath).